The chain runs to 66 residues: M-poneratoxin-Dq3a (66 aa).

Positions 1 to 23 are cleaved as a signal peptide; the sequence is MKLSALSIIFGMILVMTIMYTKA. Positions 24–43 are excised as a propeptide; that stretch reads EAEAEAEADADADAKAEAEA.

It belongs to the non-disulfide-bridged peptide (NDBP) superfamily. Medium-length antimicrobial peptide (group 3) family. Ponericin-W subfamily. Expressed by the venom gland.

The protein resides in the secreted. Its subcellular location is the target cell membrane. In terms of biological role, may have antimicrobial properties by disrupting the integrity of the bacterial cell membrane. In addition, when tested in vitro on the parasite Trypanosoma cruzi (responsible of the Chagas disease), is able to potently reduce the number of the three forms (epimastigote, trypomastigote and amastigote) by inducing cell death through necrosis. May have antimicrobial properties by disrupting the integrity of the bacterial cell membrane. In addition, when tested in vitro on the parasite Trypanosoma cruzi (responsible of the Chagas disease), is able to moderately reduce the number of the forms epimastigote and trypomastigote. Its activity on the amastigote form has not been tested. Functionally, may have antimicrobial properties by disrupting the integrity of the bacterial cell membrane. In addition, when tested in vitro on the parasite Trypanosoma cruzi (responsible of the Chagas disease), shows only a weak reduction of the number of the trypomastigote forms. Has no activity on the epimastigote forms. Its activity on the amastigote form has not been tested. The chain is M-poneratoxin-Dq3a from Dinoponera quadriceps (South American ant).